Reading from the N-terminus, the 102-residue chain is Large ribosomal subunit protein bL21 (102 aa).

It belongs to the bacterial ribosomal protein bL21 family. In terms of assembly, part of the 50S ribosomal subunit. Contacts protein L20.

This protein binds to 23S rRNA in the presence of protein L20. In Enterococcus faecalis (strain ATCC 700802 / V583), this protein is Large ribosomal subunit protein bL21.